The sequence spans 449 residues: N-succinylarginine dihydrolase (449 aa).

Substrate-binding positions include 19–28 (GGLSYGNVAS), Asn-110, and 137–138 (HR). The segment at 23–43 (YGNVASQSNSQQASNPREAAR) is disordered. Residues 27 to 37 (ASQSNSQQASN) are compositionally biased toward low complexity. Residue Glu-174 is part of the active site. Arg-214 lines the substrate pocket. The active site involves His-250. Positions 252 and 365 each coordinate substrate. Cys-371 acts as the Nucleophile in catalysis.

Belongs to the succinylarginine dihydrolase family. Homodimer.

It catalyses the reaction N(2)-succinyl-L-arginine + 2 H2O + 2 H(+) = N(2)-succinyl-L-ornithine + 2 NH4(+) + CO2. It functions in the pathway amino-acid degradation; L-arginine degradation via AST pathway; L-glutamate and succinate from L-arginine: step 2/5. In terms of biological role, catalyzes the hydrolysis of N(2)-succinylarginine into N(2)-succinylornithine, ammonia and CO(2). This chain is N-succinylarginine dihydrolase, found in Pseudomonas putida (strain ATCC 700007 / DSM 6899 / JCM 31910 / BCRC 17059 / LMG 24140 / F1).